The following is a 156-amino-acid chain: Ribosome-binding factor A (156 aa).

A disordered region spans residues 124-156 (TRAEYAGEAQPYRLEEEPEGSGDEVPPPGGDQR).

It belongs to the RbfA family. Monomer. Binds 30S ribosomal subunits, but not 50S ribosomal subunits or 70S ribosomes.

The protein resides in the cytoplasm. In terms of biological role, one of several proteins that assist in the late maturation steps of the functional core of the 30S ribosomal subunit. Associates with free 30S ribosomal subunits (but not with 30S subunits that are part of 70S ribosomes or polysomes). Required for efficient processing of 16S rRNA. May interact with the 5'-terminal helix region of 16S rRNA. In Salinispora tropica (strain ATCC BAA-916 / DSM 44818 / JCM 13857 / NBRC 105044 / CNB-440), this protein is Ribosome-binding factor A.